A 274-amino-acid chain; its full sequence is Large ribosomal subunit protein uL2 (274 aa).

The interval 223 to 256 (VVMNPVDHPHGGGEGKTGEGRHPVDPWGNLTKGY) is disordered. Over residues 229–246 (DHPHGGGEGKTGEGRHPV) the composition is skewed to basic and acidic residues.

Belongs to the universal ribosomal protein uL2 family. Part of the 50S ribosomal subunit. Forms a bridge to the 30S subunit in the 70S ribosome.

One of the primary rRNA binding proteins. Required for association of the 30S and 50S subunits to form the 70S ribosome, for tRNA binding and peptide bond formation. It has been suggested to have peptidyltransferase activity; this is somewhat controversial. Makes several contacts with the 16S rRNA in the 70S ribosome. This chain is Large ribosomal subunit protein uL2, found in Variovorax paradoxus (strain S110).